A 263-amino-acid chain; its full sequence is MSLESLFQHIIFTEHQAEESRRVMREVRSEIARCRGKIKKATEDLNEEKIKLESKVQQFSEKTFLLELLKTRENALERQCSAIVSERDRLLQACEAIKKKTTEQEERFIKEITDFNDNYEITKKRDALMEEDIKLEMADLENQAEALRGEMKSMEYNSGQLQELQKLKSELLQELFTLQKKLKVLKDEETEAICITKHLEAEKIKIREKPQHDPECVRRLKRELDLYKEEDMESVCRALQIEVDLLESTLVPKDPQDNNSLSR.

A coiled-coil region spans residues 13–191 (TEHQAEESRR…LKVLKDEETE (179 aa)).

The protein belongs to the CCDC172 family. As to quaternary structure, may interact with TEKT2. As to expression, detected in spermatozoa (at protein level). Predominantly expressed in testis and in spermatozoa from the caput and corpus epididymis.

Its subcellular location is the cytoplasm. The protein resides in the cell projection. It localises to the cilium. The polypeptide is Coiled-coil domain-containing protein 172 (Ccdc172) (Rattus norvegicus (Rat)).